The primary structure comprises 158 residues: SsrA-binding protein (158 aa).

Residues 130-158 (KGKKNHDKREAQAKRDWSRQKQRLLKDHG) are disordered. The segment covering 136-158 (DKREAQAKRDWSRQKQRLLKDHG) has biased composition (basic and acidic residues).

The protein belongs to the SmpB family.

Its subcellular location is the cytoplasm. In terms of biological role, required for rescue of stalled ribosomes mediated by trans-translation. Binds to transfer-messenger RNA (tmRNA), required for stable association of tmRNA with ribosomes. tmRNA and SmpB together mimic tRNA shape, replacing the anticodon stem-loop with SmpB. tmRNA is encoded by the ssrA gene; the 2 termini fold to resemble tRNA(Ala) and it encodes a 'tag peptide', a short internal open reading frame. During trans-translation Ala-aminoacylated tmRNA acts like a tRNA, entering the A-site of stalled ribosomes, displacing the stalled mRNA. The ribosome then switches to translate the ORF on the tmRNA; the nascent peptide is terminated with the 'tag peptide' encoded by the tmRNA and targeted for degradation. The ribosome is freed to recommence translation, which seems to be the essential function of trans-translation. This Ruegeria sp. (strain TM1040) (Silicibacter sp.) protein is SsrA-binding protein.